Reading from the N-terminus, the 439-residue chain is Membrane sensor protein UhpC (439 aa).

The Cytoplasmic portion of the chain corresponds to 1 to 25; that stretch reads MLPFLKAPADAPLMTDKYEIDARYR. The chain crosses the membrane as a helical span at residues 26–45; it reads YWRRHILLTIWLGYALFYFT. Residues 46–66 are Periplasmic-facing; it reads RKSFNAAVPEILANGVLSRSD. A helical membrane pass occupies residues 67–87; that stretch reads IGLLATLFYITYGVSKFVSGI. The Cytoplasmic portion of the chain corresponds to 88–95; it reads VSDRSNAR. The helical transmembrane segment at 96–118 threads the bilayer; that stretch reads YFMGIGLIATGIINILFGFSTSL. Residues 119-121 lie on the Periplasmic side of the membrane; sequence WAF. A helical membrane pass occupies residues 122 to 144; it reads AVLWVLNAFFQGWGSPVCARLLT. The Cytoplasmic portion of the chain corresponds to 145-162; it reads AWYSRTERGGWWALWNTA. A helical membrane pass occupies residues 163-183; sequence HNVGGALIPIVMAAAALHYGW. A topological domain (periplasmic) is located at residue arginine 184. Residues 185–205 traverse the membrane as a helical segment; sequence AGMMIAGCMAIVVGIFLCWRL. At 206–244 the chain is on the cytoplasmic side; the sequence is RDRPQALGLPAVGEWRHDALEIAQQQEGAGLTRKEILTK. A helical transmembrane segment spans residues 245–265; sequence YVLLNPYIWLLSFCYVLVYVV. Topologically, residues 266 to 289 are periplasmic; the sequence is RAAINDWGNLYMSETLGVDLVTAN. The chain crosses the membrane as a helical span at residues 290 to 310; that stretch reads TAVTMFELGGFIGALVAGWGS. The Cytoplasmic portion of the chain corresponds to 311–322; the sequence is DKLFNGNRGPMN. The chain crosses the membrane as a helical span at residues 323–343; sequence LIFAAGILLSVGSLWLMPFAS. Over 344 to 349 the chain is Periplasmic; that stretch reads YVMQAT. A helical transmembrane segment spans residues 350–370; that stretch reads CFFTIGFFVFGPQMLIGMAAA. Residues 371-379 lie on the Cytoplasmic side of the membrane; that stretch reads ECSHKEAAG. The helical transmembrane segment at 380-400 threads the bilayer; the sequence is AATGFVGLFAYLGASLAGWPL. The Periplasmic segment spans residues 401–410; that stretch reads AKVLDTWHWS. Residues 411–431 traverse the membrane as a helical segment; sequence GFFVVISIAAGISALLLLPFL. Residues 432-439 are Cytoplasmic-facing; that stretch reads NAQTPREA.

This sequence belongs to the major facilitator superfamily. Organophosphate:Pi antiporter (OPA) (TC 2.A.1.4) family.

The protein localises to the cell inner membrane. Functionally, part of the UhpABC signaling cascade that controls the expression of the hexose phosphate transporter UhpT. UhpC senses external glucose-6-phosphate and interacts with the histidine kinase UhpB, leading to the stimulation of the autokinase activity of UhpB. The protein is Membrane sensor protein UhpC of Escherichia coli (strain K12).